Reading from the N-terminus, the 305-residue chain is Phosphoribosylaminoimidazole-succinocarboxamide synthase (305 aa).

The protein belongs to the SAICAR synthetase family.

The enzyme catalyses 5-amino-1-(5-phospho-D-ribosyl)imidazole-4-carboxylate + L-aspartate + ATP = (2S)-2-[5-amino-1-(5-phospho-beta-D-ribosyl)imidazole-4-carboxamido]succinate + ADP + phosphate + 2 H(+). It functions in the pathway purine metabolism; IMP biosynthesis via de novo pathway; 5-amino-1-(5-phospho-D-ribosyl)imidazole-4-carboxamide from 5-amino-1-(5-phospho-D-ribosyl)imidazole-4-carboxylate: step 1/2. This is Phosphoribosylaminoimidazole-succinocarboxamide synthase from Tropheryma whipplei (strain TW08/27) (Whipple's bacillus).